The sequence spans 430 residues: MRSLATLHQSPASCSRSAPVAPCPARRANSSRRVARQGPRARASSPVVETESEDVDITPQIDAFEELVRLAVEKDPSLATLAEQHLRSKSKSAAPVSPFAAPSPGSPSASSMLGPSLGALPNQNKPAWLRQRAPQGEIYSGLKDQLRGLKLATVCEEAQCPNIGECWNGELATATIMLLGDTCTRGCRFCAVNTARTPPPPDPNEPVNTATAVASWGVGYVVLTSVDRDDMPDGGSEHFAATVRTLKQLRPGILVECLTPDFKGDLDAVRHLARSGLDVYAHNVETVERLQKRVRDPRAGYMQTLDVLRAAKECGVYTKSSIMLGLGETDDEVIDTMLDLKAVGVDIFTLGQYLQPTPHHLPVTEFVTPEKFEYWRKFGQEEIGFRYVASGPMVRSSYKAGEFFLHSMIESDRAKARAAQEGAAGRVRPL.

The span at 1–16 (MRSLATLHQSPASCSR) shows a compositional bias: polar residues. A chloroplast-targeting transit peptide spans 1–40 (MRSLATLHQSPASCSRSAPVAPCPARRANSSRRVARQGPR). 2 disordered regions span residues 1 to 55 (MRSL…SEDV) and 85 to 119 (HLRS…SLGA). Residues 91–119 (KSAAPVSPFAAPSPGSPSASSMLGPSLGA) are compositionally biased toward low complexity. Residues C155, C160, C166, C183, C187, C190, and S397 each contribute to the [4Fe-4S] cluster site. The Radical SAM core domain occupies 166–386 (CWNGELATAT…KFGQEEIGFR (221 aa)).

The protein belongs to the radical SAM superfamily. Lipoyl synthase family. It depends on [4Fe-4S] cluster as a cofactor.

It localises to the plastid. The protein localises to the chloroplast. The enzyme catalyses [[Fe-S] cluster scaffold protein carrying a second [4Fe-4S](2+) cluster] + N(6)-octanoyl-L-lysyl-[protein] + 2 oxidized [2Fe-2S]-[ferredoxin] + 2 S-adenosyl-L-methionine + 4 H(+) = [[Fe-S] cluster scaffold protein] + N(6)-[(R)-dihydrolipoyl]-L-lysyl-[protein] + 4 Fe(3+) + 2 hydrogen sulfide + 2 5'-deoxyadenosine + 2 L-methionine + 2 reduced [2Fe-2S]-[ferredoxin]. The protein operates within protein modification; protein lipoylation via endogenous pathway; protein N(6)-(lipoyl)lysine from octanoyl-[acyl-carrier-protein]: step 2/2. In terms of biological role, catalyzes the radical-mediated insertion of two sulfur atoms into the C-6 and C-8 positions of the octanoyl moiety bound to the lipoyl domains of lipoate-dependent enzymes, thereby converting the octanoylated domains into lipoylated derivatives. This is Lipoyl synthase, chloroplastic from Chlamydomonas reinhardtii (Chlamydomonas smithii).